Here is an 829-residue protein sequence, read N- to C-terminus: MNSGVAMKYGNDSSAELSELHSAALASLKGDIVELNKRLQQTERERDLLEKKLAKAQCEQSHLMREHEDVQERTTLRYEERITELHSVIAELNKKIDRLQGTTIREEDEYSELRSELSQSQHEVNEDSRSMDQDQTSVSIPENQSTMVTADMDNCSDLNSELQRVLTGLENVVCGRKKSSCSLSVAEVDKHIEQLTTASEHCDLAIKTVEEIEGVLGRDLYPNLAEERSRWEKELAGLREENESLTAMLCSKEEELNRTKATMNAIREERDRLRRRVRELQTRLQSVQATGPSSPGRLTSTNRPINPSTGELSTSSSSNDIPIAKIAERVKLSKTRSESSSSDRPVLGSEISSIGVSSSVAEHLAHSLQDCSNIQEIFQTLYSHGSAISESKIREFEVETERLNSRIEHLKSQNDLLTITLEECKSNAERMSMLVGKYESNATALRLALQYSEQCIEAYELLLALAESEQSLILGQFRAAGVGSSPGDQSGDENITQMLKRAHDCRKTAENAAKALLMKLDGSCGGAFAVAGCSVQPWESLSSNSHTSTTSSTASSCDTEFTKEDEQRLKDYIQQLKNDRAAVKLTMLELESIHIDPLSYDVKPRGDSQRLDLENAVLMQELMAMKEEMAELKAQLYLLEKEKKALELKLSTREAQEQAYLVHIEHLKSEVEEQKEQRMRSLSSTSSGSKDKPGKECADAASPALSLAELRTTCSENELAAEFTNAIRREKKLKARVQELVSALERLTKSSEIRHQQSAEFVNDLKRANSNLVAAYEKAKKKHQNKLKKLESQMMAMVERHETQVRMLKQRIALLEEENSRPHTNETSL.

Disordered stretches follow at residues Arg114–Ser139, Thr282–Asp320, and Glu672–Ala700. Positions Glu123–Asp132 are enriched in basic and acidic residues. A compositionally biased stretch (polar residues) spans Gln285–Leu312. Residues Ser689–Ala698 are compositionally biased toward basic and acidic residues. A Nuclear localization signal motif is present at residues Lys766 to Lys782. The PDZ-binding signature appears at Glu826–Leu829. Position 828 is a phosphoserine (Ser828).

The protein belongs to the MCC family. Interacts with SCRIB (via phosphorylated PDZ-binding motif), EZR, SNX27, NHERF1 and NHERF2. Interacts with CTNNB1; the interaction is enhanced upon Wnt stimulation. Interacts with MYH10. Interacts with CCAR2. In terms of tissue distribution, expressed in a variety of tissues.

Its subcellular location is the cell membrane. The protein localises to the cell projection. It is found in the lamellipodium. The protein resides in the nucleus. It localises to the cytoplasm. Functionally, candidate for the putative colorectal tumor suppressor gene located at 5q21. Suppresses cell proliferation and the Wnt/b-catenin pathway in colorectal cancer cells. Inhibits DNA binding of b-catenin/TCF/LEF transcription factors. Involved in cell migration independently of RAC1, CDC42 and p21-activated kinase (PAK) activation. Represses the beta-catenin pathway (canonical Wnt signaling pathway) in a CCAR2-dependent manner by sequestering CCAR2 to the cytoplasm, thereby impairing its ability to inhibit SIRT1 which is involved in the deacetylation and negative regulation of beta-catenin (CTNB1) transcriptional activity. The sequence is that of Colorectal mutant cancer protein (MCC) from Homo sapiens (Human).